A 311-amino-acid polypeptide reads, in one-letter code: uncharacterized protein (311 aa).

Residues 168 to 188 (FNVMKGAILGLPIIGGIIVGV) form a helical membrane-spanning segment.

The protein resides in the cell membrane. This is an uncharacterized protein from Edwardsiella tarda.